Here is a 62-residue protein sequence, read N- to C-terminus: Amolopin-P2 (62 aa).

The first 22 residues, 1–22, serve as a signal peptide directing secretion; that stretch reads MFTLKKSLLLLFFLGTISLSLC. A propeptide spanning residues 23-44 is cleaved from the precursor; the sequence is EQERGADEEENGGEVTEQEVKR.

Belongs to the frog skin active peptide (FSAP) family. Amolopin subfamily. As to expression, expressed by the skin glands.

It localises to the secreted. Its function is as follows. Antimicrobial peptide with activity against Gram-positive bacteria. Has been tested against S.aureus (MIC=37.5 ug/mL), against B.pumilus (MIC=75.0 ug/mL), B.cereus (no activity detected). Does not show activity against Gram-negative bacteria (E.coli, B.dysenteriae, A.calcoaceticus, P.aeruginosa) and fungi (C.albicans). Does not show hemolytic activity against rabbit erythrocytes. In Amolops loloensis (Lolokou Sucker Frog), this protein is Amolopin-P2.